A 270-amino-acid chain; its full sequence is Purine nucleoside phosphorylase BT_4389 (270 aa).

3 residues coordinate Zn(2+): His79, Cys124, and His141.

This sequence belongs to the purine nucleoside phosphorylase YfiH/LACC1 family. As to quaternary structure, homodimer. Cu(2+) serves as cofactor. Zn(2+) is required as a cofactor.

The catalysed reaction is adenosine + phosphate = alpha-D-ribose 1-phosphate + adenine. The enzyme catalyses S-methyl-5'-thioadenosine + phosphate = 5-(methylsulfanyl)-alpha-D-ribose 1-phosphate + adenine. It carries out the reaction inosine + phosphate = alpha-D-ribose 1-phosphate + hypoxanthine. It catalyses the reaction adenosine + H2O + H(+) = inosine + NH4(+). Its function is as follows. Purine nucleoside enzyme that catalyzes the phosphorolysis of adenosine and inosine nucleosides, yielding D-ribose 1-phosphate and the respective free bases, adenine and hypoxanthine. Also catalyzes the phosphorolysis of S-methyl-5'-thioadenosine into adenine and S-methyl-5-thio-alpha-D-ribose 1-phosphate. Also has adenosine deaminase activity. This chain is Purine nucleoside phosphorylase BT_4389, found in Bacteroides thetaiotaomicron (strain ATCC 29148 / DSM 2079 / JCM 5827 / CCUG 10774 / NCTC 10582 / VPI-5482 / E50).